A 564-amino-acid polypeptide reads, in one-letter code: Rhotekin (564 aa).

Omega-N-methylarginine is present on Arg14. An REM-1 domain is found at 17 to 98; sequence ALEMEFKRGR…LQRRKEAQVL (82 aa). A phosphoserine mark is found at Ser30 and Ser106. Arg230 is modified (asymmetric dimethylarginine). The residue at position 232 (Ser232) is a Phosphoserine. Residues 309 to 416 form the PH domain; sequence QPTASGALRV…WMEALWQLFF (108 aa). The segment at 518-564 is disordered; sequence TFSLDAAPADHSLGPSRSVAPLPPQRSPKSRGFYSKSQLGPWLQSPV. Phosphoserine occurs at positions 520, 529, and 544.

In terms of assembly, interacts via its C-terminal region with the TAX1BP3 PDZ domain. This interaction facilitates Rho-mediated activation of the c-Fos serum response element (SRE). Interacts with SEPT9. Specifically binds to GTP-bound RHOA, RHOB and RHOC and inhibits their GTPase activity. In terms of tissue distribution, abundantly expressed in brain and kidney. Weakly expressed in lung, testis, skeletal muscle, heart and thymus.

Mediates Rho signaling to activate NF-kappa-B and may confer increased resistance to apoptosis to cells in gastric tumorigenesis. May play a novel role in the organization of septin structures. This is Rhotekin from Mus musculus (Mouse).